Consider the following 207-residue polypeptide: dTTP/UTP pyrophosphatase (207 aa).

The Proton acceptor role is filled by aspartate 87.

It belongs to the Maf family. YhdE subfamily. Requires a divalent metal cation as cofactor.

It localises to the cytoplasm. The enzyme catalyses dTTP + H2O = dTMP + diphosphate + H(+). It carries out the reaction UTP + H2O = UMP + diphosphate + H(+). Nucleoside triphosphate pyrophosphatase that hydrolyzes dTTP and UTP. May have a dual role in cell division arrest and in preventing the incorporation of modified nucleotides into cellular nucleic acids. In Bordetella pertussis (strain Tohama I / ATCC BAA-589 / NCTC 13251), this protein is dTTP/UTP pyrophosphatase.